Here is a 327-residue protein sequence, read N- to C-terminus: DNA-directed RNA polymerase subunit alpha (327 aa).

An alpha N-terminal domain (alpha-NTD) region spans residues 1-233 (MVREKVKVST…NLFIPFLHVE (233 aa)). Residues 267–327 (LAFQYIFIDQ…KKILDILEKK (61 aa)) are alpha C-terminal domain (alpha-CTD).

Belongs to the RNA polymerase alpha chain family. In plastids the minimal PEP RNA polymerase catalytic core is composed of four subunits: alpha, beta, beta', and beta''. When a (nuclear-encoded) sigma factor is associated with the core the holoenzyme is formed, which can initiate transcription.

The protein localises to the plastid. The protein resides in the chloroplast. The catalysed reaction is RNA(n) + a ribonucleoside 5'-triphosphate = RNA(n+1) + diphosphate. In terms of biological role, DNA-dependent RNA polymerase catalyzes the transcription of DNA into RNA using the four ribonucleoside triphosphates as substrates. The polypeptide is DNA-directed RNA polymerase subunit alpha (Lepidium virginicum (Virginia pepperweed)).